The following is a 265-amino-acid chain: Anamorsin homolog 1 (265 aa).

The segment at 1–143 (MAATAAAALA…KASWSMGSSF (143 aa)) is N-terminal SAM-like domain. The linker stretch occupies residues 144-175 (PLKKATKGLPKIQIDDDSELIDEDSLLTEDDL). Positions 186, 195, 198, and 200 each coordinate [2Fe-2S] cluster. A fe-S binding site A region spans residues 186–200 (CEVGATRKACKNCTC). [4Fe-4S] cluster contacts are provided by cysteine 226, cysteine 229, cysteine 237, and cysteine 240. 2 consecutive short sequence motifs (cx2C motif) follow at residues 226 to 229 (CGNC) and 237 to 240 (CGTC). Residues 226–240 (CGNCGLGDAFRCGTC) are fe-S binding site B.

Belongs to the anamorsin family. In terms of assembly, monomer. [2Fe-2S] cluster is required as a cofactor. [4Fe-4S] cluster serves as cofactor.

The protein localises to the cytoplasm. The protein resides in the mitochondrion intermembrane space. Its function is as follows. Component of the cytosolic iron-sulfur (Fe-S) protein assembly (CIA) machinery. Required for the maturation of extramitochondrial Fe-S proteins. Part of an electron transfer chain functioning in an early step of cytosolic Fe-S biogenesis, facilitating the de novo assembly of a [4Fe-4S] cluster on the cytosolic Fe-S scaffold complex. Electrons are transferred from NADPH via a FAD- and FMN-containing diflavin oxidoreductase. Together with the diflavin oxidoreductase, also required for the assembly of the diferric tyrosyl radical cofactor of ribonucleotide reductase (RNR), probably by providing electrons for reduction during radical cofactor maturation in the catalytic small subunit. The sequence is that of Anamorsin homolog 1 from Oryza sativa subsp. indica (Rice).